Consider the following 485-residue polypeptide: Serine/threonine-protein kinase dst4 (485 aa).

The Protein kinase domain maps to 21–278 (FRVLEVIGQG…AVDLLNHPFI (258 aa)). ATP-binding positions include 27–35 (IGQGSFGVV) and lysine 50. Aspartate 142 (proton acceptor) is an active-site residue. Disordered stretches follow at residues 304–343 (RRKK…SAGL), 360–424 (VMRE…GSVV), and 436–485 (SMKL…NQDD). Positions 310 to 324 (EEEAEEAEEGDDYDD) are enriched in acidic residues. Low complexity predominate over residues 370-393 (SNNGGTFIYNNNNNNSSKTSSSGT). Composition is skewed to acidic residues over residues 406-417 (DDDDDDDIEEGG) and 450-468 (SSDE…EEGG). Polar residues predominate over residues 474-485 (VVYTKSPVNQDD).

The protein belongs to the protein kinase superfamily. STE Ser/Thr protein kinase family. STE20 subfamily. The cofactor is Mg(2+).

It catalyses the reaction L-seryl-[protein] + ATP = O-phospho-L-seryl-[protein] + ADP + H(+). It carries out the reaction L-threonyl-[protein] + ATP = O-phospho-L-threonyl-[protein] + ADP + H(+). The polypeptide is Serine/threonine-protein kinase dst4 (Dictyostelium discoideum (Social amoeba)).